The primary structure comprises 624 residues: Leucine-rich repeat, immunoglobulin-like domain and transmembrane domain-containing protein 1 (624 aa).

Residues M1–G21 form the signal peptide. An LRRNT domain is found at F22–P59. At F22–R527 the chain is on the lumenal side. LRR repeat units lie at residues D60–P81, R84–G105, R108–D129, Q132–F153, and N156–V177. An N-linked (GlcNAc...) asparagine glycan is attached at N156. Residues N201–S254 form the LRRCT domain. The Ig-like C2-type domain maps to P267–G336. C276 and C329 are disulfide-bonded. N297 and N456 each carry an N-linked (GlcNAc...) asparagine glycan. Residues M431–V519 enclose the Fibronectin type-III domain. The LRR 6 repeat unit spans residues Q526–C549. A helical transmembrane segment spans residues L528–V548. Residues C549 to C624 are Cytoplasmic-facing.

May form a homodimer. Interacts with LRIT2; may form a heterodimer with LRIT2. Interacts (via its N-terminal extracellular domain) with metabotropic glutamate receptor GRM6. Interacts (via its extreme C-terminus) with the scaffold protein FRMPD2 (via the third PDZ domain); the interaction leads to their colocalization in photoreceptor synapses. In terms of tissue distribution, expressed predominantly in developing photoreceptor and bipolar cells.

It is found in the endoplasmic reticulum membrane. The protein localises to the cell projection. The protein resides in the dendrite. Its function is as follows. Photoreceptor synaptic protein essential for normal vision. Involved in synapse formation in cone photoreceptor cells. The sequence is that of Leucine-rich repeat, immunoglobulin-like domain and transmembrane domain-containing protein 1 (Lrit1) from Mus musculus (Mouse).